Consider the following 721-residue polypeptide: MGAFRWLSIAAAASTALALTPEQLITAPRRSEAIPDPSGKVAVFSTSQYSFETHKRTSWWSLLDLKTGQTKVLTNDSSVSEIVWLSDDSILYVNSTNADIPGGVELWVTQASSFAKGYKAASLPASFSGLKTAKTKSGDIRFVAYGQSYPNGTAYNEELATAPLSSARIYDSIYVRHWDYWLSTTFNAVFSGTLKKGHGKNGYSLDGELKNLVSPVKNAESPYPPFGGASDYDLSPDGKWVAFKSKAPELPKANFTTSYIYLVPHDASETARPINGPDSPGTPKGIKGDSSSPVFSPNGDKLAYFQMRDETYESDRRVLYVYSLGSKKTIPSVAGDWDRSPDSVKWTPDGKTLIVGSEDLGRTRLFSLPANAKDDYKPKNFTDGGSASAYYFLPDSSLLVTGSALWTNWNVYTAKPEKGVIKKIASANEIDPELKGLGPSDISEFYFQGNFTDIHAWVIYPENFDKSKKYPLIFFIHGGPQGNWADGWSTRWNPKAWADQGYVVVAPNPTGSTGFGQALTDAIQNNWGGAPYDDLVKCWEYVHENLDYVDTDHGVAAGASYGGFMINWIQGSPLGRKFKALVSHDGTFVADAKVSTEELWFMQREFNGTFWDARDNYRRWDPSAPERILQFATPMLVIHSDKDYRLPVAEGLSLFNVLQERGVPSRFLNFPDENHWVVNPENSLVWHQQALGWINKYSGVEKSNPNAVSLEDTVVPVVNYN.

Residues 1–18 (MGAFRWLSIAAAASTALA) form the signal peptide. Asn-75, Asn-94, Asn-151, and Asn-254 each carry an N-linked (GlcNAc...) asparagine glycan. The segment at 271–297 (ARPINGPDSPGTPKGIKGDSSSPVFSP) is disordered. Residues Asn-380 and Asn-450 are each glycosylated (N-linked (GlcNAc...) asparagine). Ser-560 (charge relay system) is an active-site residue. A glycan (N-linked (GlcNAc...) asparagine) is linked at Asn-607. Residues Asp-643 and His-675 each act as charge relay system in the active site.

The protein belongs to the peptidase S9C family. Post-translationally, N-glycosylated. In terms of tissue distribution, expressed in mycelia and conidia.

It is found in the secreted. Its function is as follows. May be involved in metabolism of dipeptides or may affect host defense mechanisms. Has a substrate specificity limited to the hydrolysis of X-Ala, His-Ser, and Ser-Tyr dipeptides at a neutral pH optimum. The chain is Dipeptidyl-peptidase 5 from Aspergillus fumigatus (strain ATCC MYA-4609 / CBS 101355 / FGSC A1100 / Af293) (Neosartorya fumigata).